Consider the following 538-residue polypeptide: Syncytin-2 (538 aa).

Positions 1–15 (MGLLLLVLILTPLLA) are cleaved as a signal peptide. Residues 31–478 (LLQSTGSPYS…GWLNWEGTWK (448 aa)) are Extracellular-facing. The CXXC motif lies at 43–46 (CWLC). Disulfide bonds link Cys-43–Cys-46, Cys-43–Cys-439, and Cys-431–Cys-438. Residues Asn-133, Asn-146, Asn-177, Asn-220, Asn-241, Asn-247, Asn-312, and Asn-332 are each glycosylated (N-linked (GlcNAc...) asparagine). Positions 354–374 (FIPLLAGLGILAGTGTGIAGI) are fusion peptide. Residues 414 to 430 (LQNRRGLDMLTAAQGGI) carry the CKS-17 motif. The CX6CC motif lies at 431–439 (CLALDEKCC). N-linked (GlcNAc...) asparagine glycosylation occurs at Asn-443. Residues 479-499 (WFSWVLPFIGPFVSLLLLLLF) traverse the membrane as a helical segment. The Cytoplasmic portion of the chain corresponds to 500-538 (GPCLLNLITQFVSSRLQAIKLQTNLSAGRRPRTIQESPF).

The protein belongs to the gamma type-C retroviral envelope protein family. HERV class-I FRD env subfamily. As to quaternary structure, the surface and transmembrane proteins form a heterodimer. They are attached by non-covalent interactions or by a labile interchain disulfide bond. In terms of processing, specific enzymatic cleavages in vivo yield the mature SU and TM proteins. The CXXC motif is highly conserved across a broad range of retroviral envelope proteins. It is thought to participate in the formation of a labile disulfide bond possibly with the CX6CC motif present in the transmembrane protein.

Its subcellular location is the cell membrane. Its function is as follows. This endogenous retroviral envelope protein has retained its original fusogenic properties and participates in trophoblast fusion and the formation of a syncytium during placenta morphogenesis. The interaction with MFSD2A is apparently important for this process. In terms of biological role, endogenous envelope proteins may have kept, lost or modified their original function during evolution and this one is unable to confer infectivity. The protein is Syncytin-2 (ERVFRD-1) of Hylobates moloch (Silvery gibbon).